Reading from the N-terminus, the 331-residue chain is XylDLEGF operon transcriptional activator 1 (331 aa).

In terms of domain architecture, HTH araC/xylS-type spans 214-315; it reads ERVVQFIEEN…GELPSDTLRR (102 aa). 2 consecutive DNA-binding regions (H-T-H motif) follow at residues 231 to 252 and 282 to 305; these read ERLA…EKHA and VTEM…RSTF.

Its subcellular location is the cytoplasm. Its function is as follows. Regulatory protein of the TOL plasmid xyl operons. XylS activates the xylXYZLTEGFJQKIH operon required for the degradation of toluene, m-xylene and p-xylene. The protein is XylDLEGF operon transcriptional activator 1 (xylS1) of Pseudomonas putida (Arthrobacter siderocapsulatus).